Consider the following 904-residue polypeptide: MICAL-like protein 2 (904 aa).

Residues 1–107 (MAAIRALQQW…YVSQYYNYFH (107 aa)) form the Calponin-homology (CH) domain. Residues 1 to 260 (MAAIRALQQW…KLTGLVPRQP (260 aa)) are forms an intramolecular interaction with the C-terminal coiled coil domain keeping the protein in a closed conformation. Phosphoserine is present on residues S110, S143, and S153. The interval 117–178 (GVKRASEDSE…GGPPPKTDQA (62 aa)) is disordered. The span at 143-153 (SPAPARKPPLS) shows a compositional bias: pro residues. Positions 186–248 (STCGVCGKHV…TSHLPAAASA (63 aa)) constitute an LIM zinc-binding domain. Residue S249 is modified to Phosphoserine. A disordered region spans residues 251–722 (KLTGLVPRQP…PANVPALPGE (472 aa)). Residues 261-388 (GAMGVDSRTS…GGAPRVAAPQ (128 aa)) form a necessary and sufficient for interaction with actinins region. Residues 261-697 (GAMGVDSRTS…EARVQSWKEE (437 aa)) form a mediates targeting to the cell plasma membrane region. Over residues 267–277 (SRTSCSPQKAQ) the composition is skewed to polar residues. Composition is skewed to low complexity over residues 293-314 (NSPARASVPAAPNPAATSATSV) and 349-362 (SSAAPCTAAAASHP). S294 carries the phosphoserine modification. The span at 363–374 (AVPPSAPDPRPA) shows a compositional bias: pro residues. Positions 385–400 (AAPQTTLSSSSTSAAT) are enriched in low complexity. A compositionally biased stretch (polar residues) spans 408 to 433 (PSASRTQQARNKFFQTSAVPPGTSLS). Low complexity predominate over residues 459 to 480 (ALSALEEAGAPAPGRPSPATAA). Phosphoserine is present on residues S494 and S504. Composition is skewed to low complexity over residues 520 to 534 (LSTSSTSQASALPPA) and 542 to 553 (SSGVGRVGAGSR). Polar residues predominate over residues 564-578 (KSTTLTQDMSTSLQE). Over residues 593 to 622 (PVDRRSPAERTLKPKEPRALAEPRAGEAPR) the composition is skewed to basic and acidic residues. Phosphoserine is present on S598. The residue at position 644 (T644) is a Phosphothreonine. Pro residues predominate over residues 647-661 (PASPGPSLPARSPSP). A phosphoserine mark is found at S649, S658, S660, and S726. The interval 698-807 (EKKPHLQGKP…LMYKSKAQRL (110 aa)) is forms an intramolecular interaction with the N-terminal Calponin-homology and LIM zinc-binding domains-containing region keeping the protein in a closed conformation. The bMERB domain maps to 723-874 (TVTSPVRLHP…EQEEDQMLRD (152 aa)). Residues 735–771 (LSPEEIQRQLQDIERRLDALELRGVELEKRLRAAEGD) adopt a coiled-coil conformation. Residues 807 to 903 (LEEQQLDIEG…WSPKSKSSPS (97 aa)) are mediates interaction with RAB13 and is required for transition from the closed to the opened conformation.

Interacts with RAB13 (GTP-bound form); competes with RAB8A and is involved in tight junctions assembly. Interacts with RAB8A; competes with RAB13 and is involved in E-cadherin endocytic recycling. Interacts with RAB8B. Interacts (preferentially in opened conformation) with ACTN1 and ACTN4; stimulated by RAB13 activation. Interacts (via calponin-homology (CH) domain) with the filamins FLNA, FLNB and FLNC (via actin-binding domain).

It localises to the cell membrane. The protein resides in the cell junction. Its subcellular location is the tight junction. The protein localises to the recycling endosome. It is found in the cell projection. It localises to the cytoplasm. The protein resides in the cytoskeleton. Functionally, effector of small Rab GTPases which is involved in junctional complexes assembly through the regulation of cell adhesion molecules transport to the plasma membrane and actin cytoskeleton reorganization. Regulates the endocytic recycling of occludins, claudins and E-cadherin to the plasma membrane and may thereby regulate the establishment of tight junctions and adherens junctions. In parallel, may regulate actin cytoskeleton reorganization directly through interaction with F-actin or indirectly through actinins and filamins. Most probably involved in the processes of epithelial cell differentiation, cell spreading and neurite outgrowth. Undergoes liquid-liquid phase separation to form tubular recycling endosomes. Plays 2 sequential roles in the biogenesis of tubular recycling endosomes: first organizes phase separation and then the closed form formed by interaction with RAB8A promotes endosomal tubulation. In Homo sapiens (Human), this protein is MICAL-like protein 2.